The sequence spans 1021 residues: MKQRFSALDIAAIAAELREQVVGCRLNNFYDLNARTFLLKFGKQDAKYSIVIESGFRAHLTKFDRENAPLSGFVTKLRKHIKSRRLTGVSQLGTDRVLVFTFGGGANDQDPDWTYYLVCEFFAAGNVLLLDGHYKILSLLRVVTFDKDQVYAVGQKYNLDKNNLVNDNKSQSTIPHMTAERLNILLDEISTAYASPTSINEPLPDQQLSSSTKPIKVPKPVSLRKALTIRLGEYGNALIEHCLRRSKLDPLFPACQLCADETKKNDLLAAFQEADSILAAVNKPPVKGYIFSLEQALTNAADPQHPEECTTLYEDFHPFQPLQLVQANRKCMEFPTYNECVDEFFSSIEAQKLKKRAHDRLATAERRLESAKEDQARKLQSLQDAQATCALRAQAIEMNPELVEAIISYINSLLNQGMDWLDIEKLIQSQKRRSPVAAAIQIPLKLIKNAVTVFLPNPESVDNSDESSETSDDDLDDSDDDNKVKEGKVSSKFIAVELDLSLGAFANARKQYELRREALIKETKTAEAASKALKSTQRKIEQDLKRSTTADTQRILLGRKTFFFEKFHWFISSEGYLVLGGRDAQQNELLFQKYCNTGDIFVCADLPKSSIIIVKNKNPHDPIPPNTLQQAGSLALASSKAWDSKTVISAWWVRIDEVSKLAPTGEILPTGSFAIRAKKNYLPPTVLIMGYGILWQLDEKSSERRKARRLEMEVVETQGKVSELKMEGTSVTSEDNIQDVVSEVSYNEDTNNQSTPDTTGSDIHIVSEKRGKKGSKVITAKKVSAKERREARRARRQTALEESLKAPISIEDATDPQTILAILKQKKAKKKHAAREMEISSQIPSNDSSNVQTPTAESEIEEDGVSEPISAEVIEDQSRNSEAENEKGLSTEQRDEKKHAKVESFQRQEMPRSLFEEIFFAIDSLTPNPQQQDTVINAVPTFAPYNAMTKFNQKVKVMPGTGKVGKAARESIAYFMKKLPKSSKEAAYLENLKDGEIVAPISVSRLKMVFGSSGNTKKSKK.

Positions 348 to 388 form a coiled coil; it reads IEAQKLKKRAHDRLATAERRLESAKEDQARKLQSLQDAQAT. The segment at 457 to 484 is disordered; it reads NPESVDNSDESSETSDDDLDDSDDDNKV. A compositionally biased stretch (acidic residues) spans 462 to 480; sequence DNSDESSETSDDDLDDSDD. A Phosphoserine modification is found at Ser-478. Coiled coils occupy residues 507-546 and 698-727; these read NARK…DLKR and DEKS…LKME. Polar residues-rich tracts occupy residues 746-761 and 839-856; these read YNED…TTGS and ISSQ…TPTA. Disordered stretches follow at residues 746 to 801 and 832 to 905; these read YNED…TALE and HAAR…VESF. Basic and acidic residues predominate over residues 876 to 905; that stretch reads DQSRNSEAENEKGLSTEQRDEKKHAKVESF.

This sequence belongs to the NEMF family. As to quaternary structure, component of the ribosome quality control complex (RQC), composed of the E3 ubiquitin ligase rkr1/ltn1, rqc1 and mtr1/rqc2, as well as cdc48 and its ubiquitin-binding cofactors associated with the 60S ribosomal subunit. RQC2 binds to the 40S-binding surface of tRNAs.

The protein localises to the cytoplasm. Functionally, key component of the ribosome quality control complex (RQC), a ribosome-associated complex that mediates the extraction of incompletely synthesized nascent chains from stalled ribosomes as well as their ubiquitin-mediated proteasomal degradation. Thereby, frees 60S subunit ribosomes from the stalled translation complex and prevents the accumulation of nascent polypeptide chains that are potentially toxic for the cell. Within the RQC complex, mtr1/rqc2 specifically binds stalled 60S ribosomal subunits by recognizing an exposed, nascent chain-conjugated tRNA moiety and promotes the recruitment of rkr1/ltn1 to stalled 60S subunits. Following binding to stalled 60S ribosomal subunits, mtr1/rqc2 mediates CAT tailing by recruiting alanine- and threonine-charged tRNA to the A-site and directing the elongation of stalled nascent chains independently of mRNA or 40S subunits, leading to non-templated C-terminal Ala and Thr extensions (CAT tails). CAT tails promote the rkr1/ltn1-mediated ubiquitination of incompletely synthesized nascent polypeptides: CAT tailing facilitates rkr1/ltn1-dependent ubiquitination by exposing lysine residues that would otherwise remain buried in the ribosomal exit tunnel. Following ubiquitination, incompletely synthesized nascent polypeptides are recognized by CDC48 and degraded by the proteasome. CAT-tailed proteins tend to aggregate and sequester chaperones and can induce proteotoxic stress; their rkr1/ltn1-dependent ubiquitination and degradation is required to prevent proteotoxic stress. The polypeptide is Ribosome quality control complex subunit 2 (Schizosaccharomyces pombe (strain 972 / ATCC 24843) (Fission yeast)).